The primary structure comprises 423 residues: Imidazolonepropionase (423 aa).

Fe(3+) is bound by residues His78 and His80. Residues His78 and His80 each coordinate Zn(2+). Residues Arg87, Tyr150, and His183 each coordinate 4-imidazolone-5-propanoate. Residue Tyr150 coordinates N-formimidoyl-L-glutamate. His247 is a Fe(3+) binding site. Residue His247 participates in Zn(2+) binding. Glu250 provides a ligand contact to 4-imidazolone-5-propanoate. Residue Asp322 coordinates Fe(3+). Zn(2+) is bound at residue Asp322. Residues Asn324 and Gly326 each contribute to the N-formimidoyl-L-glutamate site. Ser327 contributes to the 4-imidazolone-5-propanoate binding site.

This sequence belongs to the metallo-dependent hydrolases superfamily. HutI family. Zn(2+) is required as a cofactor. The cofactor is Fe(3+).

Its subcellular location is the cytoplasm. It carries out the reaction 4-imidazolone-5-propanoate + H2O = N-formimidoyl-L-glutamate. The protein operates within amino-acid degradation; L-histidine degradation into L-glutamate; N-formimidoyl-L-glutamate from L-histidine: step 3/3. Catalyzes the hydrolytic cleavage of the carbon-nitrogen bond in imidazolone-5-propanoate to yield N-formimidoyl-L-glutamate. It is the third step in the universal histidine degradation pathway. The chain is Imidazolonepropionase from Bacillus cereus (strain B4264).